A 365-amino-acid polypeptide reads, in one-letter code: Mitogen-activated protein kinase p38b (365 aa).

The 288-residue stretch at Y24–M311 folds into the Protein kinase domain. ATP contacts are provided by residues V30–V38 and K53. The active-site Proton acceptor is the D153. The residue at position 183 (T183) is a Phosphothreonine. The TXY signature appears at T183–Y185. Phosphotyrosine is present on Y185.

This sequence belongs to the protein kinase superfamily. CMGC Ser/Thr protein kinase family. MAP kinase subfamily. The cofactor is Mg(2+). Post-translationally, dually phosphorylated on Thr-183 and Tyr-185, which activates the enzyme. As to expression, at mid-embryogenesis, highest expression is seen in developing anterior and posterior midguts. Almost ubiquitous expression throughout all development.

It localises to the nucleus. The enzyme catalyses L-seryl-[protein] + ATP = O-phospho-L-seryl-[protein] + ADP + H(+). It carries out the reaction L-threonyl-[protein] + ATP = O-phospho-L-threonyl-[protein] + ADP + H(+). Activated by threonine and tyrosine phosphorylation by Mkk3. Its function is as follows. Kinase involved in dpp signal transduction pathway in the process of wing morphogenesis when the levels of dpp are enhanced or inhibited. May down-regulate insect immunity gene expression after prolonged infection. In Drosophila melanogaster (Fruit fly), this protein is Mitogen-activated protein kinase p38b.